The sequence spans 122 residues: Phospholipase A2 crotoxin basic subunit CBd (122 aa).

Cystine bridges form between cysteine 26/cysteine 115, cysteine 28/cysteine 44, cysteine 43/cysteine 95, cysteine 49/cysteine 122, cysteine 50/cysteine 88, cysteine 57/cysteine 81, and cysteine 75/cysteine 86. Positions 27, 29, and 31 each coordinate Ca(2+). Residue histidine 47 is part of the active site. Position 48 (aspartate 48) interacts with Ca(2+). Residue aspartate 89 is part of the active site.

The protein belongs to the phospholipase A2 family. Group II subfamily. D49 sub-subfamily. Heterodimer of one of the acidic (CA1, CA2, CA3 or CA4) and one of the basic (CBa1, CBa2, CBb, CBc or CBd) subunits; non-covalently linked. The acidic subunit is non-toxic, without enzymatic activity and comprises 3 peptides that are cross-linked by 5 disulfide bridges. The basic subunit is toxic, has phospholipase A2 activity and is composed of a single chain. Multiple variants of each subunit give different crotoxin complexes that can be subdivided into 2 classes: (1) those of high toxicity, low PLA2 activity (CBb, CBc and CBd linked with high affinity to any CA) and high stability (K(d)=4.5 nM) and (2) those of moderate toxicity, high PLA2 activity (CBa2 linked with low affinity to any CA) and low stability (K(d)=25 nM). Interacts with crotoxin inhibitor from Crotalus serum (CICS); the interaction leads to dissociation of the CA-CB heterodimer and to inhibition of PLA2 activity of the CB subunit. Interacts with human NBD1 domain of CFTR. The cofactor is Ca(2+). Expressed by the venom gland.

It is found in the secreted. The enzyme catalyses a 1,2-diacyl-sn-glycero-3-phosphocholine + H2O = a 1-acyl-sn-glycero-3-phosphocholine + a fatty acid + H(+). Its function is as follows. Heterodimer CA-CB: Crotoxin is a potent presynaptic neurotoxin that possesses phospholipase A2 (PLA2) activity and exerts a lethal action by blocking neuromuscular transmission. It consists of a non-covalent association of a basic and weakly toxic PLA2 subunit (CBa2, CBb, CBc, or CBd), with a small acidic, non-enzymatic and non-toxic subunit (CA1, CA2, CA3 or CA4). The complex acts by binding to a specific 48-kDa protein (R48) receptor located on presynaptic membranes, forming a transient ternary complex CA-CB-R48, followed by dissociation of the CA-CB complex and release of the CA subunit. At equilibrium, only the CB subunits remain associated with the specific crotoxin receptor. In addition to neurotoxicity, crotoxin has been found to exert myotoxicity, nephrotoxicity, and cardiovascular toxicity. Moreover, anti-inflammatory, immunomodulatory, anti-tumor and analgesic effects of crotoxin have also been reported. Monomer CBd: The basic subunit of crotoxin is a snake venom phospholipase A2 (PLA2) that exhibits weak neurotoxicity (10-fold less than the heterodimer) and very strong anticoagulant effects by binding to factor Xa (F10) and inhibiting the prothrombinase activity. In addition, it shows the same effects described for the heterodimer and binds the nucleotide-binding domain (NBD1) of CFTR chloride channels and increases the channel current. PLA2 catalyzes the calcium-dependent hydrolysis of the 2-acyl groups in 3-sn-phosphoglycerides. The chain is Phospholipase A2 crotoxin basic subunit CBd from Crotalus durissus terrificus (South American rattlesnake).